Consider the following 260-residue polypeptide: Vesicle-associated membrane protein 7B (260 aa).

The Cytoplasmic segment spans residues 1 to 189 (MPIIYSLVAR…KCAMWWKNVK (189 aa)). Residues 7–110 (LVARGSSVLA…GMNSDFSRTL (104 aa)) form the Longin domain. The v-SNARE coiled-coil homology domain occupies 125 to 186 (TMSRTMAEID…KQLKCAMWWK (62 aa)). The helical; Anchor for type IV membrane protein transmembrane segment at 190-210 (LMLVLGAIVLIIIFIIVMSYC) threads the bilayer. Topologically, residues 211 to 260 (DGFRSGSKCRSSPSSNSTPTPTPTETPTPTPTPTSTPTPSQLLETLLNQF) are vesicular. The tract at residues 215–250 (SGSKCRSSPSSNSTPTPTPTETPTPTPTPTSTPTPS) is disordered. Over residues 230 to 246 (TPTPTETPTPTPTPTST) the composition is skewed to pro residues.

Belongs to the synaptobrevin family.

The protein resides in the cytoplasmic vesicle. Its subcellular location is the secretory vesicle membrane. The protein localises to the golgi apparatus. It is found in the trans-Golgi network membrane. It localises to the late endosome membrane. The protein resides in the lysosome membrane. Its subcellular location is the endoplasmic reticulum membrane. The protein localises to the phagosome membrane. Involved in the targeting and/or fusion of transport vesicles to their target membrane during transport of proteins from the early endosome to the lysosome. Required for heterotypic fusion of late endosomes with lysosomes and homotypic lysosomal fusion. The polypeptide is Vesicle-associated membrane protein 7B (Dictyostelium discoideum (Social amoeba)).